The primary structure comprises 173 residues: Shikimate kinase (173 aa).

16-21 contributes to the ATP binding site; that stretch reads GSGKTT. Thr-20 contributes to the Mg(2+) binding site. Residues Asp-38, Arg-62, and Gly-83 each coordinate substrate. Residue Arg-120 coordinates ATP. Arg-139 serves as a coordination point for substrate. ATP is bound at residue Arg-156.

It belongs to the shikimate kinase family. In terms of assembly, monomer. It depends on Mg(2+) as a cofactor.

The protein resides in the cytoplasm. It carries out the reaction shikimate + ATP = 3-phosphoshikimate + ADP + H(+). Its pathway is metabolic intermediate biosynthesis; chorismate biosynthesis; chorismate from D-erythrose 4-phosphate and phosphoenolpyruvate: step 5/7. In terms of biological role, catalyzes the specific phosphorylation of the 3-hydroxyl group of shikimic acid using ATP as a cosubstrate. This Corynebacterium diphtheriae (strain ATCC 700971 / NCTC 13129 / Biotype gravis) protein is Shikimate kinase.